Here is a 223-residue protein sequence, read N- to C-terminus: ATP-dependent Clp protease proteolytic subunit 2 (223 aa).

The Nucleophile role is filled by serine 118. Histidine 143 is an active-site residue.

Belongs to the peptidase S14 family. In terms of assembly, fourteen ClpP subunits assemble into 2 heptameric rings which stack back to back to give a disk-like structure with a central cavity, resembling the structure of eukaryotic proteasomes.

The protein localises to the cytoplasm. The catalysed reaction is Hydrolysis of proteins to small peptides in the presence of ATP and magnesium. alpha-casein is the usual test substrate. In the absence of ATP, only oligopeptides shorter than five residues are hydrolyzed (such as succinyl-Leu-Tyr-|-NHMec, and Leu-Tyr-Leu-|-Tyr-Trp, in which cleavage of the -Tyr-|-Leu- and -Tyr-|-Trp bonds also occurs).. Its function is as follows. Cleaves peptides in various proteins in a process that requires ATP hydrolysis. Has a chymotrypsin-like activity. Plays a major role in the degradation of misfolded proteins. The chain is ATP-dependent Clp protease proteolytic subunit 2 from Leifsonia xyli subsp. xyli (strain CTCB07).